A 720-amino-acid polypeptide reads, in one-letter code: DNA replication licensing factor mcm7-B (720 aa).

Residues 183 to 210 form a C4-type zinc finger; sequence CDQCGAETYQPIQSPTFMPLIMCPSREC. The 207-residue stretch at 331–537 folds into the MCM domain; sequence FYEKLAASIA…NDLRLAQHIT (207 aa). Tyrosine 344, glycine 383, alanine 385, lysine 386, serine 387, asparagine 488, arginine 513, and arginine 603 together coordinate ATP. Residues 512–515 carry the Arginine finger motif; the sequence is SRFD.

The protein belongs to the MCM family. Component of the mcm2-7 complex (RLF-M). The complex forms a toroidal hexameric ring with the proposed subunit order mcm2-mcm6-mcm4-mcm7-mcm3-mcm5. The heterodimer of mmcm3/mcm5 interacts with mcm4, mmcm6, mcm7 and weakly with mcm2. The N-terminus is required for interaction with mmcm3, though this interaction may not be direct, and remains in a complex with mmcm3 throughout the cell cycle. Begins to associate with zmcm6 at the neurula stage. Component of the replisome complex. Component of the CMG helicase complex, composed of the mcm2-7 complex, the GINS complex and cdc45. Post-translationally, ubiquitinated by traip when forks converge following formation of DNA interstrand cross-links. Short ubiquitin chains on mcm7 promote recruitment of DNA glycosylase neil3. If the interstrand cross-link cannot be cleaved by neil3, the ubiquitin chains continue to grow on mcm7, promoting the unloading of the CMG helicase complex by the vcp/p97 ATPase.

It is found in the nucleus. Its subcellular location is the chromosome. It catalyses the reaction ATP + H2O = ADP + phosphate + H(+). Its function is as follows. Acts as a component of the mcm2-7 complex (mcm complex) which is the putative replicative helicase essential for 'once per cell cycle' DNA replication initiation and elongation in eukaryotic cells. The active ATPase sites in the mcm2-7 ring are formed through the interaction surfaces of two neighboring subunits such that a critical structure of a conserved arginine finger motif is provided in trans relative to the ATP-binding site of the Walker A box of the adjacent subunit. The six ATPase active sites, however, are likely to contribute differentially to the complex helicase activity. The existence of maternal and zygotic forms of mcm3 and mcm6 suggests that specific forms of mcm2-7 complexes may be used during different stages of development. This is DNA replication licensing factor mcm7-B (mcm7-b) from Xenopus laevis (African clawed frog).